Consider the following 439-residue polypeptide: Glucose-6-phosphate 1-dehydrogenase (439 aa).

Lys100 is a binding site for NADP(+). His130, Lys134, Glu168, and Asp187 together coordinate substrate. His192 serves as the catalytic Proton acceptor. Lys288 provides a ligand contact to substrate.

Belongs to the glucose-6-phosphate dehydrogenase family.

The catalysed reaction is D-glucose 6-phosphate + NADP(+) = 6-phospho-D-glucono-1,5-lactone + NADPH + H(+). Its pathway is carbohydrate degradation; pentose phosphate pathway; D-ribulose 5-phosphate from D-glucose 6-phosphate (oxidative stage): step 1/3. Catalyzes the oxidation of glucose 6-phosphate to 6-phosphogluconolactone. This is Glucose-6-phosphate 1-dehydrogenase from Chlamydia trachomatis serovar D (strain ATCC VR-885 / DSM 19411 / UW-3/Cx).